The following is a 129-amino-acid chain: Class I hydrophobin 11 (129 aa).

Residues 1–19 form the signal peptide; that stretch reads MRLTPLLAALALPLLTVLA. Disulfide bonds link Cys-48-Cys-106, Cys-55-Cys-100, Cys-56-Cys-89, and Cys-107-Cys-122.

The protein belongs to the fungal hydrophobin family. As to quaternary structure, self-assembles to form functional amyloid fibrils called rodlets. Self-assembly into fibrillar rodlets occurs spontaneously at hydrophobic:hydrophilic interfaces and the rodlets further associate laterally to form amphipathic monolayers.

It is found in the secreted. Its subcellular location is the cell wall. Its function is as follows. Aerial growth, conidiation, and dispersal of filamentous fungi in the environment rely upon a capability of their secreting small amphipathic proteins called hydrophobins (HPBs) with low sequence identity. Class I can self-assemble into an outermost layer of rodlet bundles on aerial cell surfaces, conferring cellular hydrophobicity that supports fungal growth, development and dispersal; whereas Class II form highly ordered films at water-air interfaces through intermolecular interactions but contribute nothing to the rodlet structure. The chain is Class I hydrophobin 11 from Pleurotus ostreatus (strain PC15) (Oyster mushroom).